The sequence spans 119 residues: NADH-quinone oxidoreductase subunit A (119 aa).

Transmembrane regions (helical) follow at residues 9-29, 63-83, and 88-108; these read VLLF…LGYV, LVAI…PWAV, and VGGA…VGFV.

This sequence belongs to the complex I subunit 3 family. In terms of assembly, NDH-1 is composed of 14 different subunits. Subunits NuoA, H, J, K, L, M, N constitute the membrane sector of the complex.

It is found in the cell inner membrane. The enzyme catalyses a quinone + NADH + 5 H(+)(in) = a quinol + NAD(+) + 4 H(+)(out). Functionally, NDH-1 shuttles electrons from NADH, via FMN and iron-sulfur (Fe-S) centers, to quinones in the respiratory chain. The immediate electron acceptor for the enzyme in this species is believed to be ubiquinone. Couples the redox reaction to proton translocation (for every two electrons transferred, four hydrogen ions are translocated across the cytoplasmic membrane), and thus conserves the redox energy in a proton gradient. The protein is NADH-quinone oxidoreductase subunit A of Delftia acidovorans (strain DSM 14801 / SPH-1).